The primary structure comprises 334 residues: MDAKETSATDLKRPREEDDNGGAATMETENGDQKKEPACFSTVIPGWFSEMSPMWPGEAHSLKVEKVLFQGKSDYQDVIVFQSATYGKVLVLDGVIQLTERDECAYQEMITHLPLCSIPNPKKVLVIGGGDGGVLREVARHASIEQIDMCEIDKMVVDVSKQFFPDVAIGYEDPRVNLVIGDGVAFLKNAAEGSYDAVIVDSSDPIGPAKELFEKPFFQSVARALRPGGVVCTQAESLWLHMDIIEDIVSNCREIFKGSVNYAWTSVPTYPSGVIGFMLCSTEGPDVDFKHPLNPIDESSSKSNGPLKFYNAEIHSAAFCLPSFAKKVIESKAN.

A compositionally biased stretch (basic and acidic residues) spans 1 to 16; that stretch reads MDAKETSATDLKRPRE. Residues 1-35 form a disordered region; the sequence is MDAKETSATDLKRPREEDDNGGAATMETENGDQKK. One can recognise a PABS domain in the interval 45–282; it reads PGWFSEMSPM…GVIGFMLCST (238 aa). S-adenosyl 3-(methylsulfanyl)propylamine is bound at residue Gln76. Position 106 (Tyr106) interacts with putrescine. S-adenosyl 3-(methylsulfanyl)propylamine is bound by residues Gln107, Asp131, Glu151, 182–183, and Asp201; that span reads DG. The active-site Proton acceptor is Asp201. Putrescine contacts are provided by residues 201-204 and Tyr270; that span reads DSSD.

This sequence belongs to the spermidine/spermine synthase family. As to quaternary structure, homotetramer and heterodimer. Component of a multiprotein complex. Interacts with SPMS and SPDSYN2.

The catalysed reaction is S-adenosyl 3-(methylsulfanyl)propylamine + putrescine = S-methyl-5'-thioadenosine + spermidine + H(+). It participates in amine and polyamine biosynthesis; spermidine biosynthesis; spermidine from putrescine: step 1/1. The sequence is that of Spermidine synthase 1 (SPDSYN1) from Arabidopsis thaliana (Mouse-ear cress).